Here is a 364-residue protein sequence, read N- to C-terminus: Lysophosphatidic acid receptor 1 (364 aa).

Residues 1–50 are Extracellular-facing; that stretch reads MAAASTSSPVISQPQFTAMNEQQCFYNESIAFFYNRSGKYLATEWNTVSK. 2 cysteine pairs are disulfide-bonded: Cys-24-Cys-190 and Cys-188-Cys-195. Residues Asn-27 and Asn-35 are each glycosylated (N-linked (GlcNAc...) asparagine). Lys-39 contributes to the a 1-acyl-sn-glycero-3-phosphate binding site. The chain crosses the membrane as a helical span at residues 51 to 75; it reads LVMGLGITVCVFIMLANLLVMVAIY. Residues 76–83 lie on the Cytoplasmic side of the membrane; the sequence is VNRRFHFP. Residues 84–107 form a helical membrane-spanning segment; that stretch reads IYYLMANLAAADFFAGLAYFYLMF. Topologically, residues 108 to 121 are extracellular; sequence NTGPNTRRLTVSTW. Residues 122–144 traverse the membrane as a helical segment; that stretch reads LLRQGLIDTSLTASVANLLAIAI. Position 124–129 (124–129) interacts with a 1-acyl-sn-glycero-3-phosphate; the sequence is RQGLID. Residues 145–163 are Cytoplasmic-facing; that stretch reads ERHITVFRMQLHTRMSNRR. Residues 164-184 traverse the membrane as a helical segment; sequence VVVVIVVIWTMAIVMGAIPSV. Residues 185-204 are Extracellular-facing; sequence GWNCICDIDHCSNMAPLYSD. A helical transmembrane segment spans residues 205-225; the sequence is SYLVFWAIFNLVTFVVMVVLY. Position 210 (Trp-210) interacts with a 1-acyl-sn-glycero-3-phosphate. Over 226 to 255 the chain is Cytoplasmic; the sequence is AHIFGYVRQRTMRMSRHSSGPRRNRDTMMS. The chain crosses the membrane as a helical span at residues 256–280; that stretch reads LLKTVVIVLGAFIVCWTPGLVLLLL. Residues 281 to 294 lie on the Extracellular side of the membrane; sequence DVCCPQCDVLAYEK. Cys-284 and Cys-287 are oxidised to a cystine. A helical transmembrane segment spans residues 295–315; it reads FFLLLAEFNSAMNPIIYSYRD. Residues 316–364 are Cytoplasmic-facing; the sequence is KEMSATFRQILCCQRNENPNGPTEGSDRSASSLNHTILAGVHSNDHSVV. Residue Ser-341 is modified to Phosphoserine. Thr-351 is subject to Phosphothreonine.

Belongs to the G-protein coupled receptor 1 family. In terms of assembly, interacts with RALA and GRK2. Interacts with GNAQ and GNA13. Interacts with CD14; the interaction is enhanced by exposure to bacterial lipopolysaccharide (LPS). In terms of processing, N-glycosylated. In terms of tissue distribution, detected in lung. Detected in oligodendrocytes in corpus callosum in brain cortex (at protein level). Expressed within the embryonic cerebral cortex, where it is enriched in the ventricular zone. In the adult brain, also expressed in oligodendrocytes, as well as Schwann cells of the peripheral nervous system. Expressed in many other tissues, including lung, heart, intestine, spleen, thymus, and stomach. No expression in liver. Detected in kidney and testis. Detected in embryonic fibroblasts. Detected in adult lung fibroblasts and lung endothelial cells. Detected in dorsal root ganglion and dorsal root. Detected in astrocytes. Detected in bone.

It localises to the cell surface. The protein localises to the cell membrane. The protein resides in the endosome. Its function is as follows. Receptor for lysophosphatidic acid (LPA). Plays a role in the reorganization of the actin cytoskeleton, cell migration, differentiation and proliferation, and thereby contributes to the responses to tissue damage and infectious agents. Activates downstream signaling cascades via the G(i)/G(o), G(12)/G(13), and G(q) families of heteromeric G proteins. Signaling inhibits adenylyl cyclase activity and decreases cellular cAMP levels. Signaling triggers an increase of cytoplasmic Ca(2+) levels. Activates RALA; this leads to the activation of phospholipase C (PLC) and the formation of inositol 1,4,5-trisphosphate. Signaling mediates activation of down-stream MAP kinases. Contributes to the regulation of cell shape. Promotes Rho-dependent reorganization of the actin cytoskeleton in neuronal cells and neurite retraction. Promotes the activation of Rho and the formation of actin stress fibers. Promotes formation of lamellipodia at the leading edge of migrating cells via activation of RAC1. Through its function as LPA receptor, plays a role in chemotaxis and cell migration, including responses to injury and wounding. Plays a role in triggering inflammation in response to bacterial lipopolysaccharide (LPS) via its interaction with CD14. Promotes cell proliferation in response to LPA. Inhibits the intracellular ciliogenesis pathway in response to LPA and through AKT1 activation. Required for normal skeleton development. May play a role in osteoblast differentiation. Required for normal brain development. Required for normal proliferation, survival and maturation of newly formed neurons in the adult dentate gyrus. Plays a role in pain perception and in the initiation of neuropathic pain. The protein is Lysophosphatidic acid receptor 1 (Lpar1) of Mus musculus (Mouse).